The sequence spans 683 residues: Synaptic vesicle glycoprotein 2B (683 aa).

Over residues 1–10 the composition is skewed to basic and acidic residues; it reads MDDYRYRDNY. The disordered stretch occupies residues 1–73; that stretch reads MDDYRYRDNY…TKMAPSRADG (73 aa). Over 1-110 the chain is Cytoplasmic; it reads MDDYRYRDNY…ECGHGRFQWT (110 aa). Serine 33 carries the phosphoserine modification. Threonine 36 is subject to Phosphothreonine. Residues 111 to 131 traverse the membrane as a helical segment; sequence LFFVLGLALMADGVEIFVVSF. Residues 132-148 are Extracellular-facing; sequence ALPSAEKDMCLSSSKKG. Residues 149–169 traverse the membrane as a helical segment; the sequence is MLGLIVYLGMMAGAFILGGLA. At 170–182 the chain is on the cytoplasmic side; the sequence is DKLGRKKVLSMSL. The chain crosses the membrane as a helical span at residues 183–203; that stretch reads AINASFASLSSFVQGYGAFLF. Residues 204–205 are Extracellular-facing; it reads CR. The chain crosses the membrane as a helical span at residues 206-226; the sequence is LISGIGIGGSLPIVFAYFSEF. The Cytoplasmic portion of the chain corresponds to 227–237; the sequence is LSREKRGEHLS. Residues 238–258 form a helical membrane-spanning segment; the sequence is WLGIFWMTGGIYASAMAWSII. At 259-277 the chain is on the extracellular side; the sequence is PHYGWGFSMGTNYHFHSWR. The helical transmembrane segment at 278–298 threads the bilayer; that stretch reads VFVIVCALPATVSMVALKFMP. At 299 to 390 the chain is on the cytoplasmic side; sequence ESPRFLLEMG…CVMGPYRMNT (92 aa). A helical membrane pass occupies residues 391–411; sequence LILAVVWFTMALSYYGLTVWF. The Extracellular segment spans residues 412–535; that stretch reads PDMIRYFQDE…CHMDFEEDND (124 aa). Tyrosine 423 is subject to Phosphotyrosine. Asparagine 441, asparagine 491, and asparagine 516 each carry an N-linked (GlcNAc...) asparagine glycan. Residues 536–556 form a helical membrane-spanning segment; that stretch reads FLIYLVSFLGSLSVLPGNIIS. At 557-565 the chain is on the cytoplasmic side; the sequence is ALLMDRIGR. A helical transmembrane segment spans residues 566-586; sequence LKMIGGSMLISAVCCFFLFFG. The Extracellular portion of the chain corresponds to 587-592; it reads NSESAM. Residues 593–613 traverse the membrane as a helical segment; it reads IGWQCLFCGTSIAAWNALDVI. Residues 614–626 lie on the Cytoplasmic side of the membrane; sequence TVELYPTNQRATA. The chain crosses the membrane as a helical span at residues 627 to 649; the sequence is FGILNGLCKFGAILGNTIFASFV. The Extracellular portion of the chain corresponds to 650 to 653; that stretch reads GITK. The chain crosses the membrane as a helical span at residues 654–672; the sequence is VVPILLAAASLVGGGLIAL. At 673–683 the chain is on the cytoplasmic side; the sequence is RLPETREQVLM.

It belongs to the major facilitator superfamily. As to quaternary structure, interacts with SYT1 in a calcium-independent manner. Forms a complex with SYT1, syntaxin-1 and SNAP25. In terms of assembly, (Microbial infection) Interacts with C.botulinum neurotoxin type A (BoNT/A, botA). (Microbial infection) Interacts with C.botulinum neurotoxin type D (BoNT/D, botD). No evidence for its interaction with BoNT/D has also been published. In terms of processing, N-glycosylated. The N-terminal cytoplasmic domain is phosphorylated by CK1. Expressed in ribbon synapses of the retina (at protein level). Expressed in diaphragm motor nerve terminals (at protein level). Expressed in hippocampus neurons (at protein level).

It localises to the cytoplasmic vesicle. Its subcellular location is the secretory vesicle. It is found in the synaptic vesicle membrane. The protein resides in the acrosome. Functionally, probably plays a role in the control of regulated secretion in neural and endocrine cells. Its function is as follows. (Microbial infection) Receptor for C.botulinum neurotoxin type A (BoNT/A, botA); the toxin probably binds via extracellular loop 4. (Microbial infection) Possible receptor for C.botulinum neurotoxin type D (BoNT/D, botD). Not a receptor for C.botulinum neurotoxin type D (BoNT/D, botD). In terms of biological role, (Microbial infection) Receptor for C.botulinum neurotoxin type E (BoNT/E); the toxin probably binds via extracellular loop 4. It probably requires glycosylation of Asn-516. The polypeptide is Synaptic vesicle glycoprotein 2B (Sv2b) (Mus musculus (Mouse)).